Reading from the N-terminus, the 485-residue chain is Glutamyl-tRNA(Gln) amidotransferase subunit A (485 aa).

Active-site charge relay system residues include Lys79 and Ser154. Ser178 acts as the Acyl-ester intermediate in catalysis.

It belongs to the amidase family. GatA subfamily. As to quaternary structure, heterotrimer of A, B and C subunits.

The enzyme catalyses L-glutamyl-tRNA(Gln) + L-glutamine + ATP + H2O = L-glutaminyl-tRNA(Gln) + L-glutamate + ADP + phosphate + H(+). In terms of biological role, allows the formation of correctly charged Gln-tRNA(Gln) through the transamidation of misacylated Glu-tRNA(Gln) in organisms which lack glutaminyl-tRNA synthetase. The reaction takes place in the presence of glutamine and ATP through an activated gamma-phospho-Glu-tRNA(Gln). This Staphylococcus aureus (strain MRSA252) protein is Glutamyl-tRNA(Gln) amidotransferase subunit A.